The sequence spans 379 residues: Lipoyl synthase, mitochondrial (379 aa).

Cys106, Cys111, Cys117, Cys137, Cys141, Cys144, and Ser352 together coordinate [4Fe-4S] cluster. The region spanning 122–341 (EHGTQTATIM…EERGNALGFL (220 aa)) is the Radical SAM core domain.

Belongs to the radical SAM superfamily. Lipoyl synthase family. [4Fe-4S] cluster serves as cofactor.

The protein resides in the mitochondrion. It catalyses the reaction [[Fe-S] cluster scaffold protein carrying a second [4Fe-4S](2+) cluster] + N(6)-octanoyl-L-lysyl-[protein] + 2 oxidized [2Fe-2S]-[ferredoxin] + 2 S-adenosyl-L-methionine + 4 H(+) = [[Fe-S] cluster scaffold protein] + N(6)-[(R)-dihydrolipoyl]-L-lysyl-[protein] + 4 Fe(3+) + 2 hydrogen sulfide + 2 5'-deoxyadenosine + 2 L-methionine + 2 reduced [2Fe-2S]-[ferredoxin]. The protein operates within protein modification; protein lipoylation via endogenous pathway; protein N(6)-(lipoyl)lysine from octanoyl-[acyl-carrier-protein]: step 2/2. Catalyzes the radical-mediated insertion of two sulfur atoms into the C-6 and C-8 positions of the octanoyl moiety bound to the lipoyl domains of lipoate-dependent enzymes, thereby converting the octanoylated domains into lipoylated derivatives. This chain is Lipoyl synthase, mitochondrial, found in Drosophila erecta (Fruit fly).